The primary structure comprises 267 residues: Undecaprenyl-diphosphatase (267 aa).

7 consecutive transmembrane segments (helical) span residues 1–21 (MPLL…FLPV), 40–60 (GQAI…LFFW), 85–105 (LALG…FLYF), 112–132 (LRSV…LYIA), 188–208 (IAML…GTEV), 219–239 (DMGI…ALMM), and 245–265 (VSFT…LFIA).

Belongs to the UppP family.

It is found in the cell inner membrane. The enzyme catalyses di-trans,octa-cis-undecaprenyl diphosphate + H2O = di-trans,octa-cis-undecaprenyl phosphate + phosphate + H(+). Its function is as follows. Catalyzes the dephosphorylation of undecaprenyl diphosphate (UPP). Confers resistance to bacitracin. This Ruegeria sp. (strain TM1040) (Silicibacter sp.) protein is Undecaprenyl-diphosphatase.